The primary structure comprises 465 residues: Asparagine--tRNA ligase (465 aa).

It belongs to the class-II aminoacyl-tRNA synthetase family. In terms of assembly, homodimer.

It is found in the cytoplasm. The catalysed reaction is tRNA(Asn) + L-asparagine + ATP = L-asparaginyl-tRNA(Asn) + AMP + diphosphate + H(+). The protein is Asparagine--tRNA ligase of Clostridium perfringens (strain SM101 / Type A).